The sequence spans 125 residues: Cystatin-like cysteine protease inhibitor EPIC2B (125 aa).

Residues 1 to 21 (MSFLRPTLALLAVTALVTTSG) form the signal peptide. An N-linked (GlcNAc...) asparagine glycan is attached at asparagine 45. Residues 68–72 (QVVSG) carry the Secondary area of contact motif.

The protein belongs to the cystatin family. In terms of assembly, interacts with the host papain-like cysteine protease PIP1. Interacts with the host papain-like cysteine protease RCR3. Interacts with the host papain-like cysteine protease C14.

It is found in the secreted. In terms of biological role, secreted effector that interacts with and inhibits the pathogenesis-related papain-like cysteine proteases C14, PIP1 and RCR3 of host plants. Inhibition of host proteases by a pathogen extracellular protease inhibitor forms a specific type of defense-counterdefense mechanism between plants and microbial pathogens. This is Cystatin-like cysteine protease inhibitor EPIC2B from Phytophthora infestans (Potato late blight agent).